The sequence spans 598 residues: Elongation factor 4 (598 aa).

The 183-residue stretch at 4-186 folds into the tr-type G domain; that stretch reads SHIRNFSIIA…VIVNKIPPPE (183 aa). Residues 16-21 and 133-136 contribute to the GTP site; these read DHGKST and NKID.

This sequence belongs to the TRAFAC class translation factor GTPase superfamily. Classic translation factor GTPase family. LepA subfamily.

It localises to the cell inner membrane. It carries out the reaction GTP + H2O = GDP + phosphate + H(+). In terms of biological role, required for accurate and efficient protein synthesis under certain stress conditions. May act as a fidelity factor of the translation reaction, by catalyzing a one-codon backward translocation of tRNAs on improperly translocated ribosomes. Back-translocation proceeds from a post-translocation (POST) complex to a pre-translocation (PRE) complex, thus giving elongation factor G a second chance to translocate the tRNAs correctly. Binds to ribosomes in a GTP-dependent manner. The chain is Elongation factor 4 from Alteromonas mediterranea (strain DSM 17117 / CIP 110805 / LMG 28347 / Deep ecotype).